Here is a 439-residue protein sequence, read N- to C-terminus: Glucose-1-phosphate adenylyltransferase (439 aa).

Alpha-D-glucose 1-phosphate is bound by residues Tyr-116, Gly-182, 197–198 (EK), and Ser-215.

Belongs to the bacterial/plant glucose-1-phosphate adenylyltransferase family. In terms of assembly, homotetramer.

The catalysed reaction is alpha-D-glucose 1-phosphate + ATP + H(+) = ADP-alpha-D-glucose + diphosphate. The protein operates within glycan biosynthesis; glycogen biosynthesis. Functionally, involved in the biosynthesis of ADP-glucose, a building block required for the elongation reactions to produce glycogen. Catalyzes the reaction between ATP and alpha-D-glucose 1-phosphate (G1P) to produce pyrophosphate and ADP-Glc. The polypeptide is Glucose-1-phosphate adenylyltransferase (Pasteurella multocida (strain Pm70)).